The chain runs to 115 residues: Migration and invasion enhancer 1 (115 aa).

Residues 1-10 (MSGDTGTTSV) show a composition bias toward polar residues. The disordered stretch occupies residues 1-22 (MSGDTGTTSVAPPPGETEPGHG). Position 2 is an N-acetylserine (serine 2). A disulfide bridge connects residues cysteine 30 and cysteine 33. Cysteine 112 is lipidated: S-geranylgeranyl cysteine. Positions 113 to 115 (VIL) are cleaved as a propeptide — removed in mature form.

The protein belongs to the SelWTH family. In terms of assembly, interacts with GPX1. Post-translationally, isoprenylation facilitates association with the plasma membrane and enhances the migratory phenotype of cells by inducing increased filopodia formation.

Its subcellular location is the cytoplasm. It is found in the cytosol. It localises to the cell membrane. Increases cell migration by inducing filopodia formation at the leading edge of migrating cells. Plays a role in regulation of apoptosis, possibly through control of CASP3. May be involved in a redox-related process. This is Migration and invasion enhancer 1 (MIEN1) from Bos taurus (Bovine).